The sequence spans 140 residues: MRHARGYRRLNRTHEHRKALFANMAGSLIEHEQIKTTLPKAKELRPIVEKLITLAKRGDLHARRQAAAQLKQDSHVAKLFDVLGARYKDRQGGYVRIMKAGFRYGDMAPMAIIEFVERDTSAKGAADRARLEAESAADES.

The protein belongs to the bacterial ribosomal protein bL17 family. As to quaternary structure, part of the 50S ribosomal subunit. Contacts protein L32.

The polypeptide is Large ribosomal subunit protein bL17 (Paracoccus denitrificans (strain Pd 1222)).